We begin with the raw amino-acid sequence, 356 residues long: UDP-N-acetylglucosamine--N-acetylmuramyl-(pentapeptide) pyrophosphoryl-undecaprenol N-acetylglucosamine transferase (356 aa).

UDP-N-acetyl-alpha-D-glucosamine contacts are provided by residues 12–14 (TGG), Asn124, Arg163, Ser188, Ile242, 261–266 (ALTVCE), and Gln287.

Belongs to the glycosyltransferase 28 family. MurG subfamily.

It localises to the cell inner membrane. It catalyses the reaction di-trans,octa-cis-undecaprenyl diphospho-N-acetyl-alpha-D-muramoyl-L-alanyl-D-glutamyl-meso-2,6-diaminopimeloyl-D-alanyl-D-alanine + UDP-N-acetyl-alpha-D-glucosamine = di-trans,octa-cis-undecaprenyl diphospho-[N-acetyl-alpha-D-glucosaminyl-(1-&gt;4)]-N-acetyl-alpha-D-muramoyl-L-alanyl-D-glutamyl-meso-2,6-diaminopimeloyl-D-alanyl-D-alanine + UDP + H(+). It functions in the pathway cell wall biogenesis; peptidoglycan biosynthesis. In terms of biological role, cell wall formation. Catalyzes the transfer of a GlcNAc subunit on undecaprenyl-pyrophosphoryl-MurNAc-pentapeptide (lipid intermediate I) to form undecaprenyl-pyrophosphoryl-MurNAc-(pentapeptide)GlcNAc (lipid intermediate II). This Stutzerimonas stutzeri (strain A1501) (Pseudomonas stutzeri) protein is UDP-N-acetylglucosamine--N-acetylmuramyl-(pentapeptide) pyrophosphoryl-undecaprenol N-acetylglucosamine transferase.